A 328-amino-acid chain; its full sequence is MAKDIRVLLYYLYTPIENAEQFAADHLAFCKSIGLKGRILVADEGINGTVSGDYETTQKYMDYVHSLPGMEELWFKIDEESEQAFKKMFVRYKKEIVHLGLEDNDFDNDINPLETTGAYLSPKEFKEALLDKDTVVLDTRNDYEYDLGHFRGAIRPDIRNFREXPQWVRDNKEKFMDKRVVVYCTGGVRCEKFSGWMVREGYKDVGQLHGGIATYGKDPEVQGELWDGKMYVFDERIAVDVNHVNPTIVGKDWFDGTPCERYVNCGNPFCNRRILTSEENEDKYLRGCSHECRVHPRNRYVSKNELTQAEVIERLAAIGESLDQAATV.

The 95-residue stretch at 130–224 (LDKDTVVLDT…YGKDPEVQGE (95 aa)) folds into the Rhodanese domain. Cysteine 184 functions as the Cysteine persulfide intermediate in the catalytic mechanism.

Belongs to the TrhO family.

It catalyses the reaction uridine(34) in tRNA + AH2 + O2 = 5-hydroxyuridine(34) in tRNA + A + H2O. In terms of biological role, catalyzes oxygen-dependent 5-hydroxyuridine (ho5U) modification at position 34 in tRNAs. The polypeptide is tRNA uridine(34) hydroxylase (Streptococcus pneumoniae serotype 19F (strain G54)).